A 429-amino-acid polypeptide reads, in one-letter code: Histidine--tRNA ligase (429 aa).

The protein belongs to the class-II aminoacyl-tRNA synthetase family. In terms of assembly, homodimer.

Its subcellular location is the cytoplasm. It catalyses the reaction tRNA(His) + L-histidine + ATP = L-histidyl-tRNA(His) + AMP + diphosphate + H(+). The sequence is that of Histidine--tRNA ligase from Streptococcus pneumoniae (strain JJA).